The chain runs to 788 residues: Cadherin-related family member 4 (788 aa).

The signal sequence occupies residues 1-16; that stretch reads MVLLRLLVFLFAPVVS. Topologically, residues 17–686 are extracellular; that stretch reads DLCSLPCFIN…DTEAFWQPQP (670 aa). Cadherin domains follow at residues 237-338, 339-449, 444-554, and 551-674; these read LEQA…PPRC, LPAL…APRT, ACAP…EPPF, and EPPF…TPML. The N-linked (GlcNAc...) asparagine glycan is linked to N242. The helical transmembrane segment at 687–707 threads the bilayer; that stretch reads WFVVVLTATGALLLLALGWLL. Residues 708-788 are Cytoplasmic-facing; the sequence is GRLLQGLAQL…NTHTGARRWL (81 aa).

The protein localises to the membrane. Functionally, cadherins are calcium-dependent cell adhesion proteins. They preferentially interact with themselves in a homophilic manner in connecting cells; cadherins may thus contribute to the sorting of heterogeneous cell types. The protein is Cadherin-related family member 4 (CDHR4) of Homo sapiens (Human).